The sequence spans 466 residues: Asparagine--tRNA ligase (466 aa).

Belongs to the class-II aminoacyl-tRNA synthetase family. In terms of assembly, homodimer.

It localises to the cytoplasm. It catalyses the reaction tRNA(Asn) + L-asparagine + ATP = L-asparaginyl-tRNA(Asn) + AMP + diphosphate + H(+). The sequence is that of Asparagine--tRNA ligase from Shewanella loihica (strain ATCC BAA-1088 / PV-4).